Consider the following 78-residue polypeptide: RNA-binding protein Hfq (78 aa).

Positions 10–69 (DPFLNALRKEHVPVSIYLVNGIKLQGHIESFDQYVVLLRNTVTQMVYKHAISTVVPARAV) constitute a Sm domain.

This sequence belongs to the Hfq family. In terms of assembly, homohexamer.

Its function is as follows. RNA chaperone that binds small regulatory RNA (sRNAs) and mRNAs to facilitate mRNA translational regulation in response to envelope stress, environmental stress and changes in metabolite concentrations. Also binds with high specificity to tRNAs. This is RNA-binding protein Hfq from Janthinobacterium sp. (strain Marseille) (Minibacterium massiliensis).